The sequence spans 104 residues: Large ribosomal subunit protein uL24 (104 aa).

This sequence belongs to the universal ribosomal protein uL24 family. In terms of assembly, part of the 50S ribosomal subunit.

Its function is as follows. One of two assembly initiator proteins, it binds directly to the 5'-end of the 23S rRNA, where it nucleates assembly of the 50S subunit. One of the proteins that surrounds the polypeptide exit tunnel on the outside of the subunit. This is Large ribosomal subunit protein uL24 from Pectobacterium atrosepticum (strain SCRI 1043 / ATCC BAA-672) (Erwinia carotovora subsp. atroseptica).